We begin with the raw amino-acid sequence, 212 residues long: Ropporin-1A (212 aa).

Positions 12-49 (PELPKMLKEFAKAAIRVQPQDLIQWAADYFEALSRGET) constitute an RIIa domain. Ser56 carries the phosphoserine modification. The segment at 209-212 (VQLE) is interaction with RHPN1.

This sequence belongs to the ropporin family. Homodimer. Interacts with AKAP3 and RHPN1. May interact with SPA17. Interacts with FSCB; the interaction increases upon spermatozoa capacitation conditions. Interacts with CFAP61. Sumoylated, sumoylation decreases upon spermatozoa capacitation conditions. In terms of tissue distribution, testis specific in adult. Overexpressed in hematologic tumor cells.

Its subcellular location is the cell projection. It is found in the cilium. The protein localises to the flagellum. In terms of biological role, important for male fertility. With ROPN1L, involved in fibrous sheath integrity and sperm motility, plays a role in PKA-dependent signaling processes required for spermatozoa capacitation. This is Ropporin-1A (ROPN1) from Homo sapiens (Human).